The sequence spans 505 residues: Protein disulfide-isomerase A3 (505 aa).

Positions 1–24 (MRFSCLALLPGVALLLASALLASA) are cleaved as a signal peptide. One can recognise a Thioredoxin 1 domain in the interval 25–133 (SDVLELTDEN…IVSHLKKQAG (109 aa)). Active-site nucleophile residues include Cys57 and Cys60. Cys57 and Cys60 are oxidised to a cystine. N6-methyllysine is present on Lys61. Cys85 and Cys92 are disulfide-bonded. Lys129 carries the N6-succinyllysine modification. Residue Lys152 is modified to N6-acetyllysine. Position 218 is an N6-succinyllysine (Lys218). Lys252 bears the N6-acetyllysine mark. Phosphothreonine is present on Thr319. Positions 343-485 (SRDGKALERF…FISYLQREAT (143 aa)) constitute a Thioredoxin 2 domain. N6-acetyllysine is present on Lys362. Active-site nucleophile residues include Cys406 and Cys409. A disulfide bond links Cys406 and Cys409. Residues 484–505 (ATNPPIIQEEKPKKKKKAQEDL) are disordered. The segment covering 491–505 (QEEKPKKKKKAQEDL) has biased composition (basic and acidic residues). Lys494 carries the post-translational modification N6-acetyllysine. Residues 502-505 (QEDL) carry the Prevents secretion from ER motif.

It belongs to the protein disulfide isomerase family. Part of the major histocompatibility complex class I (MHC I) peptide loading complex composed of TAP1, TAP2, B2M, MHC heavy chain, TAPBP, PDIA3, and CALR. Interacts with ERP27 and CANX. Interacts with SERPINA2 and with SERPINA1. Interacts with ATP2A2. Post-translationally, within the major histocompatibility complex class I (MHC I) peptide loading complex forms reversible disulfide-linked heterodimers with TAPBP as part of its protein folding chaperone activity. This is essential to assist the dynamic assembly of the MHC I complex with high affinity antigens in the endoplasmic reticulum. Phosphorylated. As to expression, in caput epididymal spermatozoa, detected in the head, mid and principal pieces. In cauda epididymal spermatozoa detected only in the acrosome (at protein level).

The protein resides in the endoplasmic reticulum. Its subcellular location is the endoplasmic reticulum lumen. It localises to the melanosome. It catalyses the reaction Catalyzes the rearrangement of -S-S- bonds in proteins.. Seems to be inhibited by acidic phospholipids. Its function is as follows. Protein disulfide isomerase that catalyzes the formation, isomerization, and reduction or oxidation of disulfide bonds in client proteins and functions as a protein folding chaperone. Core component of the major histocompatibility complex class I (MHC I) peptide loading complex where it functions as an essential folding chaperone for TAPBP. Through TAPBP, assists the dynamic assembly of the MHC I complex with high affinity antigens in the endoplasmic reticulum. Therefore, plays a crucial role in the presentation of antigens to cytotoxic T cells in adaptive immunity. This chain is Protein disulfide-isomerase A3 (Pdia3), found in Rattus norvegicus (Rat).